Here is a 301-residue protein sequence, read N- to C-terminus: Acetylglutamate kinase (301 aa).

Substrate is bound by residues 68–69 (GG), Arg90, and Asn195.

This sequence belongs to the acetylglutamate kinase family. ArgB subfamily.

It is found in the cytoplasm. The enzyme catalyses N-acetyl-L-glutamate + ATP = N-acetyl-L-glutamyl 5-phosphate + ADP. Its pathway is amino-acid biosynthesis; L-arginine biosynthesis; N(2)-acetyl-L-ornithine from L-glutamate: step 2/4. Its function is as follows. Catalyzes the ATP-dependent phosphorylation of N-acetyl-L-glutamate. This chain is Acetylglutamate kinase, found in Pseudomonas putida (strain W619).